A 201-amino-acid polypeptide reads, in one-letter code: Probable nicotinate-nucleotide adenylyltransferase (201 aa).

It belongs to the NadD family.

The catalysed reaction is nicotinate beta-D-ribonucleotide + ATP + H(+) = deamido-NAD(+) + diphosphate. The protein operates within cofactor biosynthesis; NAD(+) biosynthesis; deamido-NAD(+) from nicotinate D-ribonucleotide: step 1/1. Catalyzes the reversible adenylation of nicotinate mononucleotide (NaMN) to nicotinic acid adenine dinucleotide (NaAD). This Clostridium botulinum (strain Loch Maree / Type A3) protein is Probable nicotinate-nucleotide adenylyltransferase.